The following is a 67-amino-acid chain: Toxin Bl-1 (67 aa).

Residues 2–66 (RDGYISQPEN…GIIVDGIKCH (65 aa)) form the LCN-type CS-alpha/beta domain. Disulfide bonds link C12–C65, C16–C37, C23–C47, and C27–C49. T67 is modified (threonine amide).

Belongs to the long (4 C-C) scorpion toxin superfamily. Sodium channel inhibitor family. Alpha subfamily. Expressed by the venom gland.

It localises to the secreted. In terms of biological role, alpha toxins bind voltage-independently at site-3 of sodium channels (Nav) and inhibit the inactivation of the activated channels, thereby blocking neuronal transmission. Is highly toxic to insects (tested on the crickets A.domesticus). This peptide may also be toxic to mammals, since it is similar to alpha-like toxins that are active on both insect and mammalian sodium channels. The sequence is that of Toxin Bl-1 from Buthacus leptochelys (Egyptian fat-tailed scorpion).